The following is a 271-amino-acid chain: Glutamate racemase 3 (271 aa).

Substrate-binding positions include 15–16 (DS) and 47–48 (YG). The active-site Proton donor/acceptor is Cys-78. Substrate is bound at residue 79-80 (NT). Cys-185 acts as the Proton donor/acceptor in catalysis. 186 to 187 (TH) is a substrate binding site.

This sequence belongs to the aspartate/glutamate racemases family.

It carries out the reaction L-glutamate = D-glutamate. It participates in cell wall biogenesis; peptidoglycan biosynthesis. Functionally, provides the (R)-glutamate required for cell wall biosynthesis. This Caldanaerobacter subterraneus subsp. tengcongensis (strain DSM 15242 / JCM 11007 / NBRC 100824 / MB4) (Thermoanaerobacter tengcongensis) protein is Glutamate racemase 3.